A 665-amino-acid chain; its full sequence is Translation factor guf1, mitochondrial (665 aa).

A mitochondrion-targeting transit peptide spans 1 to 40; it reads MRGCLQLARWLSAAPTRPAASHWPGLCAAPRFFSHSAILR. Residues 67 to 247 form the tr-type G domain; it reads ERYRNFCIVA…TVVDKIPAPI (181 aa). GTP contacts are provided by residues 76-83, 140-144, and 194-197; these read AHVDHGKS, DTPGH, and NKVD.

This sequence belongs to the TRAFAC class translation factor GTPase superfamily. Classic translation factor GTPase family. LepA subfamily.

Its subcellular location is the mitochondrion inner membrane. The catalysed reaction is GTP + H2O = GDP + phosphate + H(+). In terms of biological role, promotes mitochondrial protein synthesis. May act as a fidelity factor of the translation reaction, by catalyzing a one-codon backward translocation of tRNAs on improperly translocated ribosomes. Binds to mitochondrial ribosomes in a GTP-dependent manner. The sequence is that of Translation factor guf1, mitochondrial (guf1) from Aspergillus terreus (strain NIH 2624 / FGSC A1156).